The chain runs to 126 residues: Anti-adapter protein IraD (126 aa).

It belongs to the GpW/Gp25 family. IraD subfamily. In terms of assembly, interacts with RssB.

The protein localises to the cytoplasm. Functionally, inhibits RpoS proteolysis by regulating RssB activity, thereby increasing the stability of the sigma stress factor RpoS during oxidative stress. Its effect on RpoS stability is due to its interaction with RssB, which probably blocks the interaction of RssB with RpoS, and the consequent delivery of the RssB-RpoS complex to the ClpXP protein degradation pathway. This is Anti-adapter protein IraD from Salmonella enteritidis PT4 (strain P125109).